The sequence spans 78 residues: Beta-defensin 105A (78 aa).

Residues 1 to 27 form the signal peptide; sequence MALIKKTFFFLFAMFFILVQLSSGCQA. Disulfide bonds link Cys-43–Cys-74, Cys-53–Cys-67, and Cys-57–Cys-73.

This sequence belongs to the beta-defensin family.

The protein localises to the secreted. Its function is as follows. Has antimicrobial activity. In Pan troglodytes (Chimpanzee), this protein is Beta-defensin 105A (DEFB105A).